The sequence spans 429 residues: Glucan 1,3-beta-glucosidase (429 aa).

A signal peptide spans 1–19; sequence MLSMQVVSLISLLVSVCLA. Residues 20–27 constitute a propeptide that is removed on maturation; that stretch reads QPLPLSKR. Glu-215 (proton donor) is an active-site residue. Cystine bridges form between Cys-299-Cys-425 and Cys-324-Cys-354. Glu-316 functions as the Nucleophile in the catalytic mechanism.

Belongs to the glycosyl hydrolase 5 (cellulase A) family.

It localises to the secreted. The catalysed reaction is Successive hydrolysis of beta-D-glucose units from the non-reducing ends of (1-&gt;3)-beta-D-glucans, releasing alpha-glucose.. Beta-glucanases participate in the metabolism of beta-glucan, the main structural component of the cell wall. It could also function biosynthetically as a transglycosylase. In Kluyveromyces lactis (strain ATCC 8585 / CBS 2359 / DSM 70799 / NBRC 1267 / NRRL Y-1140 / WM37) (Yeast), this protein is Glucan 1,3-beta-glucosidase.